The sequence spans 245 residues: Small ribosomal subunit protein uS3 (245 aa).

The KH type-2 domain occupies I38–K106. The disordered stretch occupies residues Y225–E245. A compositionally biased stretch (basic residues) spans V233–E245.

It belongs to the universal ribosomal protein uS3 family. As to quaternary structure, part of the 30S ribosomal subunit. Forms a tight complex with proteins S10 and S14.

Functionally, binds the lower part of the 30S subunit head. Binds mRNA in the 70S ribosome, positioning it for translation. The sequence is that of Small ribosomal subunit protein uS3 from Azobacteroides pseudotrichonymphae genomovar. CFP2.